The following is a 445-amino-acid chain: Serine--tRNA ligase (445 aa).

Residue 250–252 (TAE) participates in L-serine binding. 281-283 (RAE) contributes to the ATP binding site. Position 304 (Glu-304) interacts with L-serine. Residue 368 to 371 (EISS) coordinates ATP. L-serine is bound at residue Ser-404.

Belongs to the class-II aminoacyl-tRNA synthetase family. Type-1 seryl-tRNA synthetase subfamily. Homodimer. The tRNA molecule binds across the dimer.

The protein resides in the cytoplasm. It catalyses the reaction tRNA(Ser) + L-serine + ATP = L-seryl-tRNA(Ser) + AMP + diphosphate + H(+). It carries out the reaction tRNA(Sec) + L-serine + ATP = L-seryl-tRNA(Sec) + AMP + diphosphate + H(+). It participates in aminoacyl-tRNA biosynthesis; selenocysteinyl-tRNA(Sec) biosynthesis; L-seryl-tRNA(Sec) from L-serine and tRNA(Sec): step 1/1. Functionally, catalyzes the attachment of serine to tRNA(Ser). Is also able to aminoacylate tRNA(Sec) with serine, to form the misacylated tRNA L-seryl-tRNA(Sec), which will be further converted into selenocysteinyl-tRNA(Sec). This Azorhizobium caulinodans (strain ATCC 43989 / DSM 5975 / JCM 20966 / LMG 6465 / NBRC 14845 / NCIMB 13405 / ORS 571) protein is Serine--tRNA ligase.